The sequence spans 112 residues: Lutropin subunit beta (112 aa).

Disulfide bonds link Cys4–Cys52, Cys18–Cys67, Cys21–Cys105, Cys29–Cys83, Cys33–Cys85, and Cys88–Cys95. Asn8 carries N-linked (GlcNAc...) asparagine glycosylation.

It belongs to the glycoprotein hormones subunit beta family. As to quaternary structure, heterodimer of a common alpha chain and a unique beta chain which confers biological specificity to thyrotropin, lutropin, follitropin and gonadotropin.

The protein resides in the secreted. In Aquarana catesbeiana (American bullfrog), this protein is Lutropin subunit beta (lhb).